The chain runs to 117 residues: Acidic phospholipase A2 (117 aa).

7 disulfide bridges follow: cysteine 11–cysteine 70, cysteine 25–cysteine 116, cysteine 27–cysteine 43, cysteine 42–cysteine 98, cysteine 49–cysteine 91, cysteine 59–cysteine 84, and cysteine 77–cysteine 89. Residues tyrosine 26, glycine 28, and glycine 30 each coordinate Ca(2+). Histidine 46 is an active-site residue. Aspartate 47 contacts Ca(2+). The N-linked (GlcNAc...) asparagine glycan is linked to asparagine 80. Aspartate 92 is a catalytic residue.

Requires Ca(2+) as cofactor. In terms of tissue distribution, expressed by the venom gland.

The protein localises to the secreted. It catalyses the reaction a 1,2-diacyl-sn-glycero-3-phosphocholine + H2O = a 1-acyl-sn-glycero-3-phosphocholine + a fatty acid + H(+). Snake venom phospholipase A2 (PLA2) that shows strong myotoxicity and induces edema in mice. Shows no cytotoxicity in vitro. Has a strong anticoagulant effect in vitro. PLA2 catalyzes the calcium-dependent hydrolysis of the 2-acyl groups in 3-sn-phosphoglycerides. This is Acidic phospholipase A2 from Micrurus dumerilii (Coral snake).